We begin with the raw amino-acid sequence, 121 residues long: Phosphoribosyl-ATP pyrophosphatase (121 aa).

The protein belongs to the PRA-PH family.

The protein localises to the cytoplasm. The catalysed reaction is 1-(5-phospho-beta-D-ribosyl)-ATP + H2O = 1-(5-phospho-beta-D-ribosyl)-5'-AMP + diphosphate + H(+). The protein operates within amino-acid biosynthesis; L-histidine biosynthesis; L-histidine from 5-phospho-alpha-D-ribose 1-diphosphate: step 2/9. The chain is Phosphoribosyl-ATP pyrophosphatase from Burkholderia cenocepacia (strain ATCC BAA-245 / DSM 16553 / LMG 16656 / NCTC 13227 / J2315 / CF5610) (Burkholderia cepacia (strain J2315)).